Reading from the N-terminus, the 258-residue chain is Tryptophan synthase alpha chain (258 aa).

Residues E47 and D58 each act as proton acceptor in the active site.

It belongs to the TrpA family. As to quaternary structure, tetramer of two alpha and two beta chains.

It carries out the reaction (1S,2R)-1-C-(indol-3-yl)glycerol 3-phosphate + L-serine = D-glyceraldehyde 3-phosphate + L-tryptophan + H2O. It functions in the pathway amino-acid biosynthesis; L-tryptophan biosynthesis; L-tryptophan from chorismate: step 5/5. Its function is as follows. The alpha subunit is responsible for the aldol cleavage of indoleglycerol phosphate to indole and glyceraldehyde 3-phosphate. The chain is Tryptophan synthase alpha chain from Bacillus cereus (strain ZK / E33L).